The following is an 822-amino-acid chain: Putative pentatricopeptide repeat-containing protein At5g13230, mitochondrial (822 aa).

Residues 1–70 (MIVFMRIIHV…QKNDPISAKA (70 aa)) constitute a mitochondrion transit peptide. PPR repeat units lie at residues 48–82 (DSHA…GSCL), 83–117 (DLFA…NNVS), 145–179 (NPHV…GYDS), 180–210 (NAFV…ILCK), 211–245 (DIVV…GFMP), 246–280 (NNYT…CYVL), 281–311 (DPRV…MPKN), 312–346 (DVVP…FVVP), 347–381 (NEFT…GFDL), 382–416 (DIYV…NEVS), 417–447 (WNTV…QVSV), 448–482 (TEVT…NNAK), 483–513 (KVAV…METI), 514–548 (DVAS…DCKP), 549–584 (NGLT…GIEP), and 585–619 (CLEH…PSVM). The interval 620–695 (IWRAMLSASM…EPGLSWIEHQ (76 aa)) is type E motif. The interval 696–726 (GDVHYFSVGLSDHPDMKLINGMLEWLNMKAT) is type E(+) motif. The type DYW motif stretch occupies residues 727–822 (RAGYVPDRNA…AGVCSCGDHW (96 aa)).

This sequence belongs to the PPR family. PCMP-H subfamily.

It is found in the mitochondrion. This Arabidopsis thaliana (Mouse-ear cress) protein is Putative pentatricopeptide repeat-containing protein At5g13230, mitochondrial (PCMP-H89).